We begin with the raw amino-acid sequence, 128 residues long: Prokineticin-2 (128 aa).

The N-terminal stretch at M1–A26 is a signal peptide. Intrachain disulfides connect C33-C45, C39-C57, C44-C106, C67-C114, and C108-C124.

It belongs to the AVIT (prokineticin) family. Expressed in the SCN and among a few other discrete brain areas, including the islands of Calleja, media l preoptic area of the hypothalamus and the shell of the nucleus accumbens. Highly expressed in testis. In the SCN, expression subjected to high amplitude of circadian oscillation.

The protein localises to the secreted. Its function is as follows. May function as an output molecule from the suprachiasmatic nucleus (SCN) that transmits behavioral circadian rhythm. May also function locally within the SCN to synchronize output. Potently contracts gastrointestinal (GI) smooth muscle. The protein is Prokineticin-2 (Prok2) of Mus musculus (Mouse).